The following is a 147-amino-acid chain: MVHFTAEEKAAITSLWGKMNVEEAGGEALGRLLVVYPWTQRFFDNFGNLSSPSAILGNLKVKAHGKKVLTSFGDAIKNMDNLKTTFAKLSELHCDKLHVDPENFRLLGNVMVIILATHFGKEFTPEVQAAWQKLVSAVAIALGHKYH.

In terms of domain architecture, Globin spans 3-147 (HFTAEEKAAI…VAIALGHKYH (145 aa)). Ser14 and Ser51 each carry phosphoserine. Heme b is bound by residues His64 and His93.

This sequence belongs to the globin family. Heterotetramer of two alpha chains and two epsilon chains in early embryonic hemoglobin Gower-2; two zeta chains and two epsilon chains in early embryonic hemoglobin Gower-1. Red blood cells.

In terms of biological role, the epsilon chain is a beta-type chain of early mammalian embryonic hemoglobin. This is Hemoglobin subunit epsilon (HBE1) from Pithecia irrorata (Gray monk saki).